Here is a 482-residue protein sequence, read N- to C-terminus: Replication factor C large subunit (482 aa).

46 to 53 (GPPGSGKT) contributes to the ATP binding site. Residues 420–482 (EKETPKKKKK…KKQATLDSFF (63 aa)) are disordered. Residues 442–476 (KISEPPKEPLKEVIEETVEKTDKKEKEKKDPKKQA) show a composition bias toward basic and acidic residues.

Belongs to the activator 1 small subunits family. RfcL subfamily. In terms of assembly, heteromultimer composed of small subunits (RfcS) and large subunits (RfcL).

Functionally, part of the RFC clamp loader complex which loads the PCNA sliding clamp onto DNA. This is Replication factor C large subunit from Methanococcus maripaludis (strain C7 / ATCC BAA-1331).